A 279-amino-acid polypeptide reads, in one-letter code: Urease accessory protein UreD (279 aa).

It belongs to the UreD family. In terms of assembly, ureD, UreF and UreG form a complex that acts as a GTP-hydrolysis-dependent molecular chaperone, activating the urease apoprotein by helping to assemble the nickel containing metallocenter of UreC. The UreE protein probably delivers the nickel.

The protein resides in the cytoplasm. Its function is as follows. Required for maturation of urease via the functional incorporation of the urease nickel metallocenter. The sequence is that of Urease accessory protein UreD from Nostoc punctiforme (strain ATCC 29133 / PCC 73102).